The following is a 214-amino-acid chain: NADH-quinone oxidoreductase subunit C (214 aa).

This sequence belongs to the complex I 30 kDa subunit family. In terms of assembly, NDH-1 is composed of 14 different subunits. Subunits NuoB, C, D, E, F, and G constitute the peripheral sector of the complex.

The protein resides in the cell inner membrane. It catalyses the reaction a quinone + NADH + 5 H(+)(in) = a quinol + NAD(+) + 4 H(+)(out). Functionally, NDH-1 shuttles electrons from NADH, via FMN and iron-sulfur (Fe-S) centers, to quinones in the respiratory chain. The immediate electron acceptor for the enzyme in this species is believed to be ubiquinone. Couples the redox reaction to proton translocation (for every two electrons transferred, four hydrogen ions are translocated across the cytoplasmic membrane), and thus conserves the redox energy in a proton gradient. This chain is NADH-quinone oxidoreductase subunit C, found in Francisella tularensis subsp. holarctica (strain LVS).